We begin with the raw amino-acid sequence, 172 residues long: uncharacterized protein (172 aa).

This is an uncharacterized protein from Microplitis demolitor bracovirus (isolate Webb) (MdBV).